We begin with the raw amino-acid sequence, 412 residues long: Putative competence-damage inducible protein (412 aa).

It belongs to the CinA family.

This Bacillus cereus (strain ATCC 10987 / NRS 248) protein is Putative competence-damage inducible protein.